Reading from the N-terminus, the 178-residue chain is ATP-dependent protease subunit HslV (178 aa).

Threonine 2 is a catalytic residue. Positions 157, 160, and 163 each coordinate Na(+).

The protein belongs to the peptidase T1B family. HslV subfamily. A double ring-shaped homohexamer of HslV is capped on each side by a ring-shaped HslU homohexamer. The assembly of the HslU/HslV complex is dependent on binding of ATP.

The protein localises to the cytoplasm. The catalysed reaction is ATP-dependent cleavage of peptide bonds with broad specificity.. With respect to regulation, allosterically activated by HslU binding. Its function is as follows. Protease subunit of a proteasome-like degradation complex believed to be a general protein degrading machinery. In Hamiltonella defensa subsp. Acyrthosiphon pisum (strain 5AT), this protein is ATP-dependent protease subunit HslV.